A 638-amino-acid polypeptide reads, in one-letter code: Methylmalonyl-CoA mutase small subunit (638 aa).

Positions 1–11 are enriched in polar residues; it reads MSSTDQGTNPA. The tract at residues 1-34 is disordered; it reads MSSTDQGTNPADTDDLTPTTLSLAGDFPKATEEQ.

This sequence belongs to the methylmalonyl-CoA mutase family. In terms of assembly, heterodimer of an alpha and a beta chain. Requires adenosylcob(III)alamin as cofactor.

The catalysed reaction is (R)-methylmalonyl-CoA = succinyl-CoA. It participates in metabolic intermediate metabolism; propanoyl-CoA degradation; succinyl-CoA from propanoyl-CoA: step 3/3. Catalyzes the isomerization of succinyl-CoA to methylmalonyl-CoA during synthesis of propionate from tricarboxylic acid-cycle intermediates. In Propionibacterium freudenreichii subsp. shermanii, this protein is Methylmalonyl-CoA mutase small subunit (mutA).